We begin with the raw amino-acid sequence, 492 residues long: Osmoregulated proline transporter OpuE (492 aa).

13 consecutive transmembrane segments (helical) span residues 3–23, 40–60, 62–82, 125–145, 161–181, 190–210, 224–244, 271–291, 314–334, 365–385, 394–414, 424–444, and 449–469; these read IEII…GWYA, LGPF…WMLM, VPGA…GLTI, IVSA…GMVS, GLFL…FLAV, AIMF…VGGV, LLDI…AWGL, IGMS…LIGV, ILFH…AIMS, LVMI…LLSL, LVGY…LLSL, ALAA…TGLA, and VYEI…VSMI.

Belongs to the sodium:solute symporter (SSF) (TC 2.A.21) family.

The protein localises to the cell membrane. It catalyses the reaction L-proline(in) + Na(+)(in) = L-proline(out) + Na(+)(out). In terms of biological role, catalyzes the uptake of extracellular proline under high-osmolarity growth conditions. Essential for the use of proline present in the environment as an osmoprotectant. The polypeptide is Osmoregulated proline transporter OpuE (Bacillus subtilis (strain 168)).